The following is a 503-amino-acid chain: UDP-N-acetylmuramate--L-alanine ligase (503 aa).

Residue 120-126 (GTHGKTS) coordinates ATP.

It belongs to the MurCDEF family.

It is found in the cytoplasm. It catalyses the reaction UDP-N-acetyl-alpha-D-muramate + L-alanine + ATP = UDP-N-acetyl-alpha-D-muramoyl-L-alanine + ADP + phosphate + H(+). It participates in cell wall biogenesis; peptidoglycan biosynthesis. In terms of biological role, cell wall formation. This Rhodococcus opacus (strain B4) protein is UDP-N-acetylmuramate--L-alanine ligase.